The chain runs to 142 residues: MLEIDNQTPLESDFLLLEKIANVLAPTQIIELILVSGETMREINRDLRGCDYATDVLSFPLEAIPHTPLGSVVINAPLAQTNALKLGHRLEEEIALLFIHGVLHLLGYDHEKDKGEQRQKESELIKIFNLPLSLIERTQDSF.

Positions 100, 104, and 110 each coordinate Zn(2+).

This sequence belongs to the endoribonuclease YbeY family. The cofactor is Zn(2+).

The protein resides in the cytoplasm. In terms of biological role, single strand-specific metallo-endoribonuclease involved in late-stage 70S ribosome quality control and in maturation of the 3' terminus of the 16S rRNA. This chain is Endoribonuclease YbeY, found in Helicobacter pylori (strain G27).